The sequence spans 194 residues: MEAFVRETGRAVVIPNDNINTDIILPKQFLKNILKTGFGKDLFFDWRYNADGSLNEAFELNKPAHQGASILITGNDFGSGSSREHAVWALTDYGFRAVIGGGFSDIFYMNSTKNGLLPIVLPEENRKILRGIQADENIQIDLPEQTVTYKNYTFHFDINSQWKEKFINGEDDIDNTMKYEKLIAAFEKQRPNFG.

This sequence belongs to the LeuD family. LeuD type 1 subfamily. In terms of assembly, heterodimer of LeuC and LeuD.

The enzyme catalyses (2R,3S)-3-isopropylmalate = (2S)-2-isopropylmalate. Its pathway is amino-acid biosynthesis; L-leucine biosynthesis; L-leucine from 3-methyl-2-oxobutanoate: step 2/4. Functionally, catalyzes the isomerization between 2-isopropylmalate and 3-isopropylmalate, via the formation of 2-isopropylmaleate. The sequence is that of 3-isopropylmalate dehydratase small subunit from Leuconostoc mesenteroides subsp. mesenteroides (strain ATCC 8293 / DSM 20343 / BCRC 11652 / CCM 1803 / JCM 6124 / NCDO 523 / NBRC 100496 / NCIMB 8023 / NCTC 12954 / NRRL B-1118 / 37Y).